Here is a 577-residue protein sequence, read N- to C-terminus: Steryl-sulfatase (577 aa).

The first 19 residues, 1–19 (MLWPCLLALLLSQLNFLCA), serve as a signal peptide directing secretion. Topologically, residues 21 to 183 (RPGPGPNFLL…GTVFGSAQQV (163 aa)) are lumenal. 2 residues coordinate Ca(2+): Asp34 and Asp35. N-linked (GlcNAc...) asparagine glycosylation occurs at Asn46. Cys74 serves as a coordination point for Ca(2+). Cys74 functions as the Nucleophile in the catalytic mechanism. A 3-oxoalanine (Cys) modification is found at Cys74. His135 is an active-site residue. Cystine bridges form between Cys140–Cys147 and Cys169–Cys241. The helical transmembrane segment at 184–207 (FVVLPMNILGAVLLAMALARWAGL) threads the bilayer. Residues 208–211 (ARPP) are Cytoplasmic-facing. Residues 212-233 (GWVFGVTVAAMAAVGGAYVAFL) form a helical membrane-spanning segment. The Lumenal segment spans residues 234 to 577 (YHFRPANCFL…PLACRCAGDG (344 aa)). A glycan (N-linked (GlcNAc...) asparagine) is linked at Asn332. Ca(2+)-binding residues include Asp341 and His342. 3 disulfides stabilise this stretch: Cys445-Cys488, Cys480-Cys486, and Cys561-Cys571. Residue Asn458 is glycosylated (N-linked (GlcNAc...) asparagine).

This sequence belongs to the sulfatase family. As to quaternary structure, homodimer. Ca(2+) serves as cofactor. In terms of processing, the conversion to 3-oxoalanine (also known as C-formylglycine, FGly), of a serine or cysteine residue in prokaryotes and of a cysteine residue in eukaryotes, is critical for catalytic activity.

It localises to the microsome membrane. It is found in the endoplasmic reticulum membrane. It catalyses the reaction dehydroepiandrosterone 3-sulfate + H2O = 3beta-hydroxyandrost-5-en-17-one + sulfate + H(+). It carries out the reaction estrone 3-sulfate + H2O = estrone + sulfate + H(+). Functionally, catalyzes the conversion of sulfated steroid precursors, such as dehydroepiandrosterone sulfate (DHEA-S) and estrone sulfate to the free steroid. The protein is Steryl-sulfatase (Sts) of Rattus norvegicus (Rat).